A 161-amino-acid chain; its full sequence is Putative pre-16S rRNA nuclease (161 aa).

The protein belongs to the YqgF nuclease family.

Its subcellular location is the cytoplasm. In terms of biological role, could be a nuclease involved in processing of the 5'-end of pre-16S rRNA. The protein is Putative pre-16S rRNA nuclease of Bradyrhizobium sp. (strain BTAi1 / ATCC BAA-1182).